A 601-amino-acid chain; its full sequence is Protein FREE1 (601 aa).

Positions 1-240 (MQQGDYNSYY…SGEYPAFEDS (240 aa)) are disordered. Pro residues predominate over residues 21-35 (TPNPNPNPNPSPPAP). Polar residues-rich tracts occupy residues 63-79 (DYSNYSQNYTPYGQNSE) and 125-155 (LSSYGSFDSTAPYQQPTSQHMYYSPYDQHQT). Positions 161–175 (APPPSSAPAPNPNPA) are enriched in pro residues. The segment covering 176–197 (PYSSSLYSAPPYSSGGSSIPPS) has biased composition (low complexity). Residues 214–231 (NRSRSDLGSDLYGKRSDS) show a composition bias toward basic and acidic residues. S218 bears the Phosphoserine mark. The segment at 338-344 (LDGLRML) is nuclear export signal. The FYVE-type zinc finger occupies 455 to 515 (DEAVSKCTSC…VCDRCMAEVS (61 aa)). 8 residues coordinate Zn(2+): C461, C464, C477, C480, C485, C488, C507, and C510. Positions 527-552 (RNVSLQSHEDLARKLQEEMERNRKSS) form a coiled coil. Phosphoserine occurs at positions 530 and 533. Residues 542–561 (QEEMERNRKSSSGLREGSGR) are disordered.

Part of the ESCRT-I complex. Interacts with VPS23A and VPS23B, but not with VPS28 or VPS37. Interacts with IRT1. Interacts with SH3P2. Interacts with SH3P3, but not with SH3P1. Interacts (via N-terminus) with PYL4 and PYR3. Interacts (via C-terminus) with SNRK2D/SNRK2.2, SNRK2I/SNRK2.3, ABF4 and ABI5. Interacts with SINAT1, SINAT2, SINAT3 and SINAT4. Interacts with SINAT5. Component of a phosphoinositide 3-kinase (PI3K) complex containing ATG6, SH3P2 and FREE1. Phosphorylated at Ser-530 and Ser-533 by SNRK2D/SNRK2.2 and SNRK2I/SNRK2.3 in response to abscisic acid (ABA). Phosphorylation is necessary for ABA-induced FREE1 nuclear import. Post-translationally, ubiquitinated by SINAT1, SINAT2, SINAT3 and SINAT4 for subsequent proteasomal degradation. In terms of tissue distribution, ubiquitous. Lowest expression in mature seeds.

It is found in the cytoplasm. The protein resides in the prevacuolar compartment membrane. Its subcellular location is the late endosome. The protein localises to the endosome. It localises to the multivesicular body. It is found in the nucleus. Endosomal sorting complex required for transport (ESCRT) component regulating multivesicular body (MVB) protein sorting and plant growth. Required for the formation of intra-luminal vesicles (ILVs)in MVBs. Binds to phosphatidylinositol-3-phosphate (PI3P) and ubiquitin. Controls IRT1 recycling to the plasma membrane and impacts the polar delivery of this transporter to the outer plasma membrane domain. Regulates ubiquitin-dependent membrane protein degradation, vacuolar transport, autophagy, and vacuole biogenesis. ESCRT component that binds ubiquitin and regulates vacuolar sorting of proteins. Attenuates abscisic acid (ABA) signaling through RSL1-triggered degradation of the ABA receptors PYR1 and PYL4. Interacts with PYL4 and PYR1, and delivers the ubiquitinated ABA receptors as cargo to the vacuolar degradation pathway. In response to ABA, is phosphorylated by SnRK2 kinases which mediate FREE1 nuclear import. In the nucleus, interacts with the ABA-responsive transcription factors ABF4 and ABI5 to reduce their ability to bind to their cis-regulatory sequences of downstream genes, thus leading to transcriptional inhibition of ABA signaling pathway. Negatively regulates salt stress tolerance via a negative feedback loop involving ABA signaling pathway. The sequence is that of Protein FREE1 from Arabidopsis thaliana (Mouse-ear cress).